The chain runs to 427 residues: Tyrosine--tRNA ligase (427 aa).

Tyr33 is a binding site for L-tyrosine. The 'HIGH' region motif lies at 38–47 (PTAPSLHVGN). Positions 168 and 172 each coordinate L-tyrosine. Residues 228 to 232 (KFGKS) carry the 'KMSKS' region motif. Residue Lys231 participates in ATP binding. Residues 358–426 (EHMLDLVAST…GKKHHYLIKV (69 aa)) form the S4 RNA-binding domain.

The protein belongs to the class-I aminoacyl-tRNA synthetase family. TyrS type 1 subfamily. As to quaternary structure, homodimer.

The protein localises to the cytoplasm. It catalyses the reaction tRNA(Tyr) + L-tyrosine + ATP = L-tyrosyl-tRNA(Tyr) + AMP + diphosphate + H(+). Its function is as follows. Catalyzes the attachment of tyrosine to tRNA(Tyr) in a two-step reaction: tyrosine is first activated by ATP to form Tyr-AMP and then transferred to the acceptor end of tRNA(Tyr). The protein is Tyrosine--tRNA ligase of Amoebophilus asiaticus (strain 5a2).